A 380-amino-acid polypeptide reads, in one-letter code: Gonadotropin-releasing hormone II receptor (380 aa).

Over 1 to 40 (MSAVNGTPWGSSAREEVWAGSGVEVEGSELPTFSTAAKVR) the chain is Extracellular. Residues 41-60 (VGVTIVLFVSSAGGNLAVLW) traverse the membrane as a helical segment. Topologically, residues 61–76 (SVTRPQPSQLRPSPVR) are cytoplasmic. The helical transmembrane segment at 77–96 (RLFAHLAAADLLVTFVVMPL) threads the bilayer. The Extracellular segment spans residues 97 to 114 (DATWNITVQWLAGDIACR). A glycan (N-linked (GlcNAc...) asparagine) is linked at Asn101. A disulfide bridge links Cys113 with Cys188. Residues 115–136 (TLMFLKLMAMYAAAFLPVVIGL) traverse the membrane as a helical segment. Over 137-160 (DRQAAVLNPLGSRSGVRKLLGAAW) the chain is Cytoplasmic. A helical membrane pass occupies residues 161–178 (GLSFLLALPQLFLFHTVH). Residues 179-204 (RAGPVPFTQCATKGSFKARWQETTYN) are Extracellular-facing. A helical membrane pass occupies residues 205 to 224 (LFTFCCLFLLPLTAMAICYS). Over 225-278 (RIVLGVSSPRTRKGSHAPAGEFALRRSFDNRPRVRLRALRLALLVLLTFILCWT) the chain is Cytoplasmic. The helical transmembrane segment at 279–297 (PYYLLGLWYWFSPSMLSEV) threads the bilayer. Over 298 to 303 (PPSLSH) the chain is Extracellular. A helical membrane pass occupies residues 304–323 (ILFLFGLLNAPLDPLLYGAF). The Cytoplasmic segment spans residues 324-380 (TLGCRRGHQELSMDSSREEGSRRMFQQDIQALRQTEVQKTVTSRKAGETKDIPITSI).

Belongs to the G-protein coupled receptor 1 family. Phosphorylated on the C-terminal cytoplasmic tail.

The protein localises to the cell membrane. In terms of biological role, receptor for gonadotropin releasing hormone II (GnRH II). This receptor mediates its action by association with G proteins that activate a phosphatidylinositol-calcium second messenger system. This is Gonadotropin-releasing hormone II receptor (GNRHR2) from Callithrix jacchus (White-tufted-ear marmoset).